The chain runs to 366 residues: MRVDLFDFELPEAAIALRPASPRDASRLLVVRPGETLADRGVRDLPALLNPGDALVFNDTRVIPARLSGIRHRAGGTGQRCEAMLHLREAPDRWRAFARPAKRLAPGDRIRFGGEGANQGASEVCVLSGLDATVEERGEGGEILLRFDLAGPALDEAIAGLGALPLPPYIAGKRATDARDTTDYQTVYAREPGAVAAPTAGLHFSDALLDGIDAAGIERIHVTLHVGAGTFLPVKADDTEAHRMHAEIGILDTATAERLNAVRARGNRIVAVGTTALRLLESATDPDGTVRPFSGATDIFITPGYRFRAVDALVTNFHLPRSTLFMLVSAFSGLDTMRAAYAHAIASGYRFYSYGDASLLFPERAP.

The protein belongs to the QueA family. Monomer.

The protein resides in the cytoplasm. The catalysed reaction is 7-aminomethyl-7-carbaguanosine(34) in tRNA + S-adenosyl-L-methionine = epoxyqueuosine(34) in tRNA + adenine + L-methionine + 2 H(+). The protein operates within tRNA modification; tRNA-queuosine biosynthesis. In terms of biological role, transfers and isomerizes the ribose moiety from AdoMet to the 7-aminomethyl group of 7-deazaguanine (preQ1-tRNA) to give epoxyqueuosine (oQ-tRNA). The protein is S-adenosylmethionine:tRNA ribosyltransferase-isomerase of Methylorubrum populi (strain ATCC BAA-705 / NCIMB 13946 / BJ001) (Methylobacterium populi).